A 396-amino-acid chain; its full sequence is Acetate kinase (396 aa).

N7 lines the Mg(2+) pocket. K14 contributes to the ATP binding site. R88 lines the substrate pocket. The active-site Proton donor/acceptor is D145. ATP is bound by residues 205–209, 279–281, and 327–331; these read HLGNG, DFR, and GIGEN. Mg(2+) is bound at residue E381.

This sequence belongs to the acetokinase family. As to quaternary structure, homodimer. The cofactor is Mg(2+). Requires Mn(2+) as cofactor.

It localises to the cytoplasm. The enzyme catalyses acetate + ATP = acetyl phosphate + ADP. The protein operates within metabolic intermediate biosynthesis; acetyl-CoA biosynthesis; acetyl-CoA from acetate: step 1/2. Functionally, catalyzes the formation of acetyl phosphate from acetate and ATP. Can also catalyze the reverse reaction. This is Acetate kinase from Campylobacter jejuni subsp. jejuni serotype O:23/36 (strain 81-176).